A 389-amino-acid polypeptide reads, in one-letter code: Aspartic protease 6 (389 aa).

Positions 1 to 15 are cleaved as a signal peptide; that stretch reads MKTFILLAVLGLASA. In terms of domain architecture, Peptidase A1 spans 71 to 384; that stretch reads YLGNITIGTP…DIGNKRMGFA (314 aa). Asn74 carries N-linked (GlcNAc...) asparagine glycosylation. Residue Asp89 is part of the active site. Cys102 and Cys106 are joined by a disulfide. The active site involves Asp277. Cys312 and Cys344 are disulfide-bonded.

Belongs to the peptidase A1 family. In terms of processing, glycosylated. Has phosphorylcholine-substituted oligosaccharide N-glycans. As to expression, expressed in intestine, muscles, pharynx and hypodermis.

The protein resides in the secreted. Aspartic protease. This chain is Aspartic protease 6, found in Caenorhabditis elegans.